The sequence spans 196 residues: Lipoprotein signal peptidase (196 aa).

Transmembrane regions (helical) follow at residues 43 to 63, 75 to 95, and 97 to 117; these read LMLK…GISF, AIFL…MICS, and TIGS…NLID. Residues aspartate 126 and aspartate 144 contribute to the active site. The helical transmembrane segment at 135–155 threads the bilayer; the sequence is YSFPVFNLADCFITLGVIILI.

Belongs to the peptidase A8 family.

Its subcellular location is the cell inner membrane. It catalyses the reaction Release of signal peptides from bacterial membrane prolipoproteins. Hydrolyzes -Xaa-Yaa-Zaa-|-(S,diacylglyceryl)Cys-, in which Xaa is hydrophobic (preferably Leu), and Yaa (Ala or Ser) and Zaa (Gly or Ala) have small, neutral side chains.. It participates in protein modification; lipoprotein biosynthesis (signal peptide cleavage). In terms of biological role, this protein specifically catalyzes the removal of signal peptides from prolipoproteins. In Rickettsia typhi (strain ATCC VR-144 / Wilmington), this protein is Lipoprotein signal peptidase.